A 407-amino-acid polypeptide reads, in one-letter code: Argininosuccinate synthase (407 aa).

ATP is bound by residues 13 to 21 and A40; that span reads AYSGGLDTS. L-citrulline is bound by residues Y91 and S96. An ATP-binding site is contributed by G121. Positions 123, 127, and 128 each coordinate L-aspartate. Residue N127 coordinates L-citrulline. Positions 131, 182, 191, 267, and 279 each coordinate L-citrulline.

It belongs to the argininosuccinate synthase family. Type 1 subfamily. As to quaternary structure, homotetramer.

Its subcellular location is the cytoplasm. It carries out the reaction L-citrulline + L-aspartate + ATP = 2-(N(omega)-L-arginino)succinate + AMP + diphosphate + H(+). The protein operates within amino-acid biosynthesis; L-arginine biosynthesis; L-arginine from L-ornithine and carbamoyl phosphate: step 2/3. This Bartonella bacilliformis (strain ATCC 35685 / KC583 / Herrer 020/F12,63) protein is Argininosuccinate synthase.